A 142-amino-acid chain; its full sequence is Small ribosomal subunit protein uS9 (142 aa).

This sequence belongs to the universal ribosomal protein uS9 family. Component of the small ribosomal subunit. Mature ribosomes consist of a small (40S) and a large (60S) subunit. The 40S subunit contains about 32 different proteins and 1 molecule of RNA (18S). The 60S subunit contains 45 different proteins and 3 molecules of RNA (25S, 5.8S and 5S).

It localises to the cytoplasm. Component of the ribosome, a large ribonucleoprotein complex responsible for the synthesis of proteins in the cell. The small ribosomal subunit (SSU) binds messenger RNAs (mRNAs) and translates the encoded message by selecting cognate aminoacyl-transfer RNA (tRNA) molecules. The large subunit (LSU) contains the ribosomal catalytic site termed the peptidyl transferase center (PTC), which catalyzes the formation of peptide bonds, thereby polymerizing the amino acids delivered by tRNAs into a polypeptide chain. The nascent polypeptides leave the ribosome through a tunnel in the LSU and interact with protein factors that function in enzymatic processing, targeting, and the membrane insertion of nascent chains at the exit of the ribosomal tunnel. This Candida albicans (strain SC5314 / ATCC MYA-2876) (Yeast) protein is Small ribosomal subunit protein uS9 (RPS16A).